A 402-amino-acid polypeptide reads, in one-letter code: Flavohemoprotein (402 aa).

Residues 1–136 (MLSAKTIEIV…IADAFISIEA (136 aa)) form the Globin domain. Residue histidine 85 participates in heme b binding. Catalysis depends on charge relay system residues tyrosine 95 and glutamate 135. Residues 147–402 (GGWKDFRNFV…EFFGPATSLQ (256 aa)) are reductase. Residues 150–260 (KDFRNFVIVK…SAPAGDFVLN (111 aa)) enclose the FAD-binding FR-type domain. Residues tyrosine 188 and 204 to 207 (RQYS) contribute to the FAD site. 273–278 (GVGITP) is a binding site for NADP(+). 394–397 (FFGP) contributes to the FAD binding site.

The protein belongs to the globin family. Two-domain flavohemoproteins subfamily. It in the C-terminal section; belongs to the flavoprotein pyridine nucleotide cytochrome reductase family. Heme b is required as a cofactor. Requires FAD as cofactor.

It catalyses the reaction 2 nitric oxide + NADPH + 2 O2 = 2 nitrate + NADP(+) + H(+). The catalysed reaction is 2 nitric oxide + NADH + 2 O2 = 2 nitrate + NAD(+) + H(+). In terms of biological role, is involved in NO detoxification in an aerobic process, termed nitric oxide dioxygenase (NOD) reaction that utilizes O(2) and NAD(P)H to convert NO to nitrate, which protects the bacterium from various noxious nitrogen compounds. Therefore, plays a central role in the inducible response to nitrosative stress. In Bacillus cereus (strain ATCC 14579 / DSM 31 / CCUG 7414 / JCM 2152 / NBRC 15305 / NCIMB 9373 / NCTC 2599 / NRRL B-3711), this protein is Flavohemoprotein.